The following is a 360-amino-acid chain: Phosphoserine aminotransferase (360 aa).

Position 42 (arginine 42) interacts with L-glutamate. Pyridoxal 5'-phosphate-binding residues include tryptophan 102, threonine 152, aspartate 171, and glutamine 194. Lysine 195 bears the N6-(pyridoxal phosphate)lysine mark. A pyridoxal 5'-phosphate-binding site is contributed by 237 to 238 (NT).

It belongs to the class-V pyridoxal-phosphate-dependent aminotransferase family. SerC subfamily. Homodimer. Requires pyridoxal 5'-phosphate as cofactor.

The protein localises to the cytoplasm. It carries out the reaction O-phospho-L-serine + 2-oxoglutarate = 3-phosphooxypyruvate + L-glutamate. It catalyses the reaction 4-(phosphooxy)-L-threonine + 2-oxoglutarate = (R)-3-hydroxy-2-oxo-4-phosphooxybutanoate + L-glutamate. The protein operates within amino-acid biosynthesis; L-serine biosynthesis; L-serine from 3-phospho-D-glycerate: step 2/3. It participates in cofactor biosynthesis; pyridoxine 5'-phosphate biosynthesis; pyridoxine 5'-phosphate from D-erythrose 4-phosphate: step 3/5. Catalyzes the reversible conversion of 3-phosphohydroxypyruvate to phosphoserine and of 3-hydroxy-2-oxo-4-phosphonooxybutanoate to phosphohydroxythreonine. The chain is Phosphoserine aminotransferase from Coxiella burnetii (strain Dugway 5J108-111).